A 299-amino-acid polypeptide reads, in one-letter code: Regucalcin (299 aa).

Glu-18 lines the a divalent metal cation pocket. Positions 101, 103, and 121 each coordinate substrate. Residues Asn-154 and Asp-204 each coordinate a divalent metal cation. The Proton donor/acceptor role is filled by Asp-204.

The protein belongs to the SMP-30/CGR1 family. It depends on Zn(2+) as a cofactor. The cofactor is Mn(2+). Ca(2+) serves as cofactor. Requires Mg(2+) as cofactor. In terms of tissue distribution, expressed in the liver, and in the pronephros from the late tadpole stage.

It localises to the cytoplasm. It catalyses the reaction D-glucono-1,5-lactone + H2O = D-gluconate + H(+). Its pathway is cofactor biosynthesis; L-ascorbate biosynthesis via UDP-alpha-D-glucuronate pathway; L-ascorbate from UDP-alpha-D-glucuronate: step 3/4. Its function is as follows. Gluconolactonase with low activity towards other sugar lactones, including gulonolactone and galactonolactone. Catalyzes a key step in ascorbic acid (vitamin C) biosynthesis. Can also hydrolyze diisopropyl phosphorofluoridate and phenylacetate (in vitro). Calcium-binding protein. Modulates Ca(2+) signaling, and Ca(2+)-dependent cellular processes and enzyme activities. The sequence is that of Regucalcin from Xenopus laevis (African clawed frog).